A 214-amino-acid polypeptide reads, in one-letter code: 3,4-dihydroxy-2-butanone 4-phosphate synthase (214 aa).

D-ribulose 5-phosphate is bound by residues 37–38 (RE), Asp42, 150–154 (RRGHT), and Glu174. Mg(2+) is bound at residue Glu38. His153 is a binding site for Mg(2+).

It belongs to the DHBP synthase family. Homodimer. Mg(2+) is required as a cofactor. It depends on Mn(2+) as a cofactor.

The catalysed reaction is D-ribulose 5-phosphate = (2S)-2-hydroxy-3-oxobutyl phosphate + formate + H(+). It participates in cofactor biosynthesis; riboflavin biosynthesis; 2-hydroxy-3-oxobutyl phosphate from D-ribulose 5-phosphate: step 1/1. In terms of biological role, catalyzes the conversion of D-ribulose 5-phosphate to formate and 3,4-dihydroxy-2-butanone 4-phosphate. The protein is 3,4-dihydroxy-2-butanone 4-phosphate synthase of Pasteurella multocida (strain Pm70).